A 73-amino-acid chain; its full sequence is Defensin-like protein 10 (73 aa).

The signal sequence occupies residues 1–28 (MKLSLRLISALLMSVMLLFATGMGPVEA). Disulfide bonds link Cys-31-Cys-73, Cys-42-Cys-62, Cys-48-Cys-67, and Cys-52-Cys-69.

It belongs to the DEFL family.

The protein resides in the secreted. Functionally, confers broad-spectrum resistance to pathogens. In Arabidopsis thaliana (Mouse-ear cress), this protein is Defensin-like protein 10 (PDF2.6).